A 138-amino-acid polypeptide reads, in one-letter code: Acidic phospholipase A2 AplTX-I (138 aa).

Positions 1 to 16 (MRTLWIMAVLLLGVEG) are cleaved as a signal peptide. Intrachain disulfides connect C42-C131, C44-C60, C59-C111, C65-C138, C66-C104, C73-C97, and C91-C102. Residues Y43, G45, and G47 each contribute to the Ca(2+) site. The active site involves H63. A Ca(2+)-binding site is contributed by D64. Residue D105 is part of the active site.

Monomer. It depends on Ca(2+) as a cofactor. As to expression, expressed by the venom gland.

It localises to the secreted. It carries out the reaction a 1,2-diacyl-sn-glycero-3-phosphocholine + H2O = a 1-acyl-sn-glycero-3-phosphocholine + a fatty acid + H(+). Inhibited by divalent cations different from calcium ions (cadmium, magnesium, manganese, zinc), since they act as competitive antagonists of this cofactor. Its function is as follows. Snake venom phospholipase A2 (PLA2) that triggers a high neuromuscular toxicity in chick biventer cervicis preparations, but not in mouse phrenic nerve-diaphragm (PND) preparations, suggesting a selective neurotoxin activity towards birds. Does not induce myotoxic, coagulant, anticoagulant, edema, and antibacterial activities. PLA2 catalyzes the calcium-dependent hydrolysis of the 2-acyl groups in 3-sn-phosphoglycerides. This chain is Acidic phospholipase A2 AplTX-I, found in Agkistrodon piscivorus leucostoma (Western cottonmouth).